The sequence spans 263 residues: Mediator of RNA polymerase II transcription subunit 6 (263 aa).

The segment covering 163 to 181 (IHQSTSNPTQGQSSGKSIS) has biased composition (polar residues). The disordered stretch occupies residues 163-232 (IHQSTSNPTQ…NGSTSSAESA (70 aa)). A compositionally biased stretch (low complexity) spans 182-202 (ATVGNTGTTATPMTMQTPQTV).

This sequence belongs to the Mediator complex subunit 6 family. Component of the Mediator complex.

The protein resides in the nucleus. Functionally, component of the Mediator complex, a coactivator involved in the regulated transcription of nearly all RNA polymerase II-dependent genes. Mediator functions as a bridge to convey information from gene-specific regulatory proteins to the basal RNA polymerase II transcription machinery. Mediator is recruited to promoters by direct interactions with regulatory proteins and serves as a scaffold for the assembly of a functional preinitiation complex with RNA polymerase II and the general transcription factors. The protein is Mediator of RNA polymerase II transcription subunit 6 (MED6) of Scheffersomyces stipitis (strain ATCC 58785 / CBS 6054 / NBRC 10063 / NRRL Y-11545) (Yeast).